The primary structure comprises 282 residues: Undecaprenyl-diphosphatase 1 (282 aa).

The next 8 membrane-spanning stretches (helical) occupy residues 1–21 (MLLL…VLPL), 46–66 (GVAL…LYFW), 91–111 (AFLV…LAHF), 117–137 (SPGL…LGVI), 150–170 (MGGI…LPGV), 193–213 (FSML…GLDL), 226–246 (LIAA…MMAW), and 260–280 (VLLG…APFL).

This sequence belongs to the UppP family.

The protein localises to the cell inner membrane. The enzyme catalyses di-trans,octa-cis-undecaprenyl diphosphate + H2O = di-trans,octa-cis-undecaprenyl phosphate + phosphate + H(+). Catalyzes the dephosphorylation of undecaprenyl diphosphate (UPP). Confers resistance to bacitracin. This Rhodospirillum rubrum (strain ATCC 11170 / ATH 1.1.1 / DSM 467 / LMG 4362 / NCIMB 8255 / S1) protein is Undecaprenyl-diphosphatase 1.